Reading from the N-terminus, the 254-residue chain is TLC domain-containing protein At5g14285 (254 aa).

6 consecutive transmembrane segments (helical) span residues 12–32 (DLPI…FIVF), 45–65 (SCLI…RAVF), 82–101 (TVLD…YIVF), 124–144 (FLVF…EVTS), 172–192 (LSPP…PLFF), and 211–231 (WLWI…ILWI). One can recognise a TLC domain in the interval 38 to 248 (QIRPEASSCL…FSERKANKIR (211 aa)).

It is found in the membrane. The protein is TLC domain-containing protein At5g14285 of Arabidopsis thaliana (Mouse-ear cress).